The chain runs to 461 residues: UDP-N-acetylmuramate--L-alanine ligase (461 aa).

112-118 (GTHGKTT) provides a ligand contact to ATP.

The protein belongs to the MurCDEF family.

The protein localises to the cytoplasm. It carries out the reaction UDP-N-acetyl-alpha-D-muramate + L-alanine + ATP = UDP-N-acetyl-alpha-D-muramoyl-L-alanine + ADP + phosphate + H(+). It participates in cell wall biogenesis; peptidoglycan biosynthesis. Cell wall formation. The polypeptide is UDP-N-acetylmuramate--L-alanine ligase (Hydrogenovibrio crunogenus (strain DSM 25203 / XCL-2) (Thiomicrospira crunogena)).